Reading from the N-terminus, the 635-residue chain is Probable potassium transport system protein Kup (635 aa).

12 helical membrane passes run 22-42, 59-79, 111-131, 148-168, 180-200, 216-236, 259-279, 297-317, 349-369, 378-398, 404-424, and 428-448; these read LVIG…LYTL, VLGI…LKYV, MYVV…DGVI, APKL…MLFL, AFGP…VYNM, VLFF…VVLA, WQFV…ALVL, ALYP…QALI, IYVP…VVGF, AYGV…VIYA, VPAP…CAFF, and IIKF…LFTL.

The protein belongs to the HAK/KUP transporter (TC 2.A.72) family.

It is found in the cell inner membrane. It carries out the reaction K(+)(in) + H(+)(in) = K(+)(out) + H(+)(out). Transport of potassium into the cell. Likely operates as a K(+):H(+) symporter. The protein is Probable potassium transport system protein Kup of Xanthomonas oryzae pv. oryzae (strain KACC10331 / KXO85).